We begin with the raw amino-acid sequence, 68 residues long: Large ribosomal subunit protein uL29 (68 aa).

Residues 32-68 are disordered; it reads QDQLKRRTGSLDNPAERTQHRRDLARVLTVLTQKTKA. Basic and acidic residues predominate over residues 45–56; sequence PAERTQHRRDLA.

The protein belongs to the universal ribosomal protein uL29 family.

This Myxococcus xanthus (strain DK1622) protein is Large ribosomal subunit protein uL29.